The chain runs to 433 residues: 3-phosphoshikimate 1-carboxyvinyltransferase (433 aa).

K23, S24, and R28 together coordinate 3-phosphoshikimate. Position 23 (K23) interacts with phosphoenolpyruvate. G95 and R123 together coordinate phosphoenolpyruvate. 3-phosphoshikimate-binding residues include S167, Q169, D317, and K344. Phosphoenolpyruvate is bound at residue Q169. D317 (proton acceptor) is an active-site residue. Phosphoenolpyruvate-binding residues include R348 and R390.

It belongs to the EPSP synthase family. Monomer.

The protein localises to the cytoplasm. The catalysed reaction is 3-phosphoshikimate + phosphoenolpyruvate = 5-O-(1-carboxyvinyl)-3-phosphoshikimate + phosphate. It participates in metabolic intermediate biosynthesis; chorismate biosynthesis; chorismate from D-erythrose 4-phosphate and phosphoenolpyruvate: step 6/7. Catalyzes the transfer of the enolpyruvyl moiety of phosphoenolpyruvate (PEP) to the 5-hydroxyl of shikimate-3-phosphate (S3P) to produce enolpyruvyl shikimate-3-phosphate and inorganic phosphate. This is 3-phosphoshikimate 1-carboxyvinyltransferase from Staphylococcus epidermidis (strain ATCC 35984 / DSM 28319 / BCRC 17069 / CCUG 31568 / BM 3577 / RP62A).